The primary structure comprises 290 residues: MADHSEVDSVSGTATTGHAWDGIKELNTPLPRWWVITFYITIVWAIGYWIVYPAWPTITSNTKGLFGYSSRADVAVELANLEKIRGDKMAALATASLADIEKDPQMLALARAKGKTVFGDNCAACHGTGAAGAKGFPNLNDDDWLWGGSLEQIQQTLLYGVRSGHPKTREGQMLAFGKDGTLKPAEIITVANYVRSLSGLPTRQGYDAAAGAKIFAENCVACHGDNAKGNPEVGAPNLTDKIWLYGSDEATLIETITNGRAGVMPAWEGRLDPTTIKAMAVYVHSLGGGK.

A helical membrane pass occupies residues 33-53 (WWVITFYITIVWAIGYWIVYP). Cytochrome c domains are found at residues 109–198 (LARA…RSLS) and 206–287 (YDAA…HSLG). Heme c contacts are provided by C122, C125, H126, M173, C219, C222, H223, and M264.

It belongs to the CcoP / FixP family. As to quaternary structure, component of the cbb3-type cytochrome c oxidase at least composed of FixN, FixO, FixQ and FixP. Requires heme c as cofactor.

It is found in the cell inner membrane. It functions in the pathway energy metabolism; oxidative phosphorylation. Functionally, C-type cytochrome. Part of the cbb3-type cytochrome c oxidase complex. FixP subunit is required for transferring electrons from donor cytochrome c via its heme groups to FixO subunit. From there, electrons are shuttled to the catalytic binuclear center of FixN subunit where oxygen reduction takes place. The complex also functions as a proton pump. This chain is Cbb3-type cytochrome c oxidase subunit FixP, found in Bradyrhizobium sp. (strain ORS 278).